The primary structure comprises 2030 residues: Dedicator of cytokinesis protein 3 (2030 aa).

The SH3 domain occupies 6–67 (EEEKYGVVIC…PANYIHLKKA (62 aa)). Positions 421–599 (RNDLYLTLEK…ESFFISTQLS (179 aa)) constitute a C2 DOCK-type domain. The DOCKER domain maps to 1228–1635 (KSEINKEEMY…LYHEFPGLDK (408 aa)). 4 disordered regions span residues 1641–1662 (SGTS…PESI), 1734–1771 (SSSQ…SLPD), 1849–1927 (DTPP…ADED), and 1951–2030 (QPCR…RGEQ). Phosphoserine is present on Ser-1658. Residues 1734-1754 (SSSQASPSSSSLSSTHSAPSQ) are compositionally biased toward low complexity. A compositionally biased stretch (polar residues) spans 1755-1765 (MITSAPSSARG). Positions 1880-1902 (GSNSTLSGSASSGVSSLSESNFG) are enriched in low complexity. The segment covering 1967-1977 (PMDPPALPPKP) has biased composition (pro residues). Positions 1970 to 1976 (PPALPPK) match the SH3-binding motif. Composition is skewed to basic and acidic residues over residues 1984-2001 (ALEH…ERPR) and 2014-2030 (AKEE…RGEQ).

Belongs to the DOCK family. In terms of assembly, interacts with presenilin proteins PSEN1 and PSEN2. Interacts with CRK. As to expression, in normal brains, it is localized in the neuropil, and occasionally in the pyramidal cells, while in Alzheimer disease brains, it is associated with neurofibrillary tangles.

The protein resides in the cytoplasm. Its function is as follows. Potential guanine nucleotide exchange factor (GEF). GEF proteins activate some small GTPases by exchanging bound GDP for free GTP. Its interaction with presenilin proteins as well as its ability to stimulate Tau/MAPT phosphorylation suggest that it may be involved in Alzheimer disease. Ectopic expression in nerve cells decreases the secretion of amyloid-beta APBA1 protein and lowers the rate of cell-substratum adhesion, suggesting that it may affect the function of some small GTPase involved in the regulation of actin cytoskeleton or cell adhesion receptors. This Homo sapiens (Human) protein is Dedicator of cytokinesis protein 3 (DOCK3).